The following is a 204-amino-acid chain: HTH-type transcriptional repressor KstR2 (204 aa).

The HTH tetR-type domain occupies 13–73 (SGRRTELLDI…EILRGFLDDL (61 aa)). The segment at residues 36 to 55 (TVRDIADAAGILSGSLYHHF) is a DNA-binding region (H-T-H motif).

As to quaternary structure, homodimer.

Functionally, controls the expression of a small regulon that may play a role in the utilization of cholesterol. The polypeptide is HTH-type transcriptional repressor KstR2 (kstR2) (Rhodococcus jostii (strain RHA1)).